A 161-amino-acid chain; its full sequence is 6,7-dimethyl-8-ribityllumazine synthase (161 aa).

Residues tryptophan 26, 58–60 (SFE), and 81–83 (VVI) contribute to the 5-amino-6-(D-ribitylamino)uracil site. 86 to 87 (GT) lines the (2S)-2-hydroxy-3-oxobutyl phosphate pocket. Catalysis depends on histidine 89, which acts as the Proton donor. Phenylalanine 114 is a 5-amino-6-(D-ribitylamino)uracil binding site. Arginine 128 lines the (2S)-2-hydroxy-3-oxobutyl phosphate pocket.

This sequence belongs to the DMRL synthase family.

The catalysed reaction is (2S)-2-hydroxy-3-oxobutyl phosphate + 5-amino-6-(D-ribitylamino)uracil = 6,7-dimethyl-8-(1-D-ribityl)lumazine + phosphate + 2 H2O + H(+). It functions in the pathway cofactor biosynthesis; riboflavin biosynthesis; riboflavin from 2-hydroxy-3-oxobutyl phosphate and 5-amino-6-(D-ribitylamino)uracil: step 1/2. Its function is as follows. Catalyzes the formation of 6,7-dimethyl-8-ribityllumazine by condensation of 5-amino-6-(D-ribitylamino)uracil with 3,4-dihydroxy-2-butanone 4-phosphate. This is the penultimate step in the biosynthesis of riboflavin. In Streptomyces coelicolor (strain ATCC BAA-471 / A3(2) / M145), this protein is 6,7-dimethyl-8-ribityllumazine synthase.